A 513-amino-acid polypeptide reads, in one-letter code: uncharacterized protein (513 aa).

5 consecutive transmembrane segments (helical) span residues 262–282 (FAIF…FWQL), 304–324 (YMFL…ITYH), 341–361 (EPIP…FEAL), 382–402 (LVIG…VIIV), and 429–449 (MFLA…ILVL). A disordered region spans residues 489–513 (PGTYSRGNGQKGAKREDPKDEENNI). A compositionally biased stretch (basic and acidic residues) spans 501 to 513 (AKREDPKDEENNI).

This sequence belongs to the GerABKA family.

Its subcellular location is the cell membrane. This is an uncharacterized protein from Bacillus subtilis (strain 168).